Here is a 461-residue protein sequence, read N- to C-terminus: MEEFEEFRRKGEMSSRCGNHRVLRKWNSCACELAVPFEVPEHAITKLHIYDFDNTLFATPGPTEQLYTRELLNLLTSSTLPNGGWWNEPGFLQAAIEISKTKPRRYSWNADIVKLAEESYSAKDTISIVLTGREESKFHKLIEHALQTARSHWKCSENEFRFNAVCLKKRAISEYTSKYKKELMRDFLEYYPSLRELSIYDDRIHQIDAFKSFFHSLDLPRLKWSAIPVRPFTKSLPREQELEMVMDMVRKNNSQALSTSQKFDLRRTPRQIGYILCTASHRLLSIEVIKYLKRRKGRRTFRPKLYEHPLYIPCAEPGKDIPALEIAKVWSNNDTRTFDSEKKVQHISQIFYLEQPGKCIVHFQVTDLAVIASAHHNRRKPLEVYFKATPEPNRYTFTLFPEYIVTGHFYKRDRIEDLEVVTERLINCKEDIHWVPLDNTIPIKAFFGRFAKLAAIPCSNA.

This is an uncharacterized protein from Saccharomyces cerevisiae (strain ATCC 204508 / S288c) (Baker's yeast).